A 309-amino-acid polypeptide reads, in one-letter code: Porphobilinogen deaminase (309 aa).

The residue at position 244 (cysteine 244) is an S-(dipyrrolylmethanemethyl)cysteine.

Belongs to the HMBS family. In terms of assembly, monomer. The cofactor is dipyrromethane.

The enzyme catalyses 4 porphobilinogen + H2O = hydroxymethylbilane + 4 NH4(+). It functions in the pathway porphyrin-containing compound metabolism; protoporphyrin-IX biosynthesis; coproporphyrinogen-III from 5-aminolevulinate: step 2/4. In terms of biological role, tetrapolymerization of the monopyrrole PBG into the hydroxymethylbilane pre-uroporphyrinogen in several discrete steps. The protein is Porphobilinogen deaminase of Listeria innocua serovar 6a (strain ATCC BAA-680 / CLIP 11262).